A 186-amino-acid polypeptide reads, in one-letter code: UPF0398 protein BPUM_1952 (186 aa).

It belongs to the UPF0398 family.

The polypeptide is UPF0398 protein BPUM_1952 (Bacillus pumilus (strain SAFR-032)).